Here is a 1046-residue protein sequence, read N- to C-terminus: Phospholipase D zeta 2 (1046 aa).

The PX domain maps to 45 to 205 (PKAAIVSVSR…KEVCKFLEVS (161 aa)). In terms of domain architecture, PH spans 215 to 343 (SKMKEGYVTV…WVKAVDEAGC (129 aa)). The PLD phosphodiesterase 1 domain occupies 472–499 (YLWSHHEKIVIVDYQVCFIGGLDLCFGR). Active-site residues include histidine 477, lysine 479, and aspartate 484. Residues 653 to 667 (GRGDLKLDSGARQDP) are compositionally biased toward basic and acidic residues. Positions 653 to 677 (GRGDLKLDSGARQDPGETSEESDLD) are disordered. Residues 847–874 (SQIYVHSKLMIVDDRIAVIGSSNINDRS) enclose the PLD phosphodiesterase 2 domain. Residues histidine 852, lysine 854, and aspartate 859 contribute to the active site.

This sequence belongs to the phospholipase D family. PXPH-PLD subfamily. Does not require Ca(2+) or any other cation for activity. serves as cofactor. Expressed in seedlings, roots, leaves, stems and flowers. Highest expression in roots. Detected only in the meristematic regions up to 4 days after germination and then at later stages in all tissues.

The enzyme catalyses a 1,2-diacyl-sn-glycero-3-phosphocholine + H2O = a 1,2-diacyl-sn-glycero-3-phosphate + choline + H(+). In terms of biological role, hydrolyzes glycerol-phospholipids at the terminal phosphodiesteric bond to generate phosphatidic acids (PA). Phosphatidylcholine-selective. Regulates vesicle trafficking and auxin responses. Required for the normal cycling of PIN-2 containing vesicles. Contributes to the supply of inorganic phosphorus for cell metabolism and diacylglycerol moieties for galactolipid synthesis in phosphorus-starved roots. Involved in root elongation during phosphate limitation. The protein is Phospholipase D zeta 2 of Arabidopsis thaliana (Mouse-ear cress).